Consider the following 215-residue polypeptide: Phosphatidylserine decarboxylase proenzyme (215 aa).

Serine 183 functions as the Schiff-base intermediate with substrate; via pyruvic acid in the catalytic mechanism. At serine 183 the chain carries Pyruvic acid (Ser); by autocatalysis.

This sequence belongs to the phosphatidylserine decarboxylase family. PSD-A subfamily. Heterodimer of a large membrane-associated beta subunit and a small pyruvoyl-containing alpha subunit. Requires pyruvate as cofactor. Post-translationally, is synthesized initially as an inactive proenzyme. Formation of the active enzyme involves a self-maturation process in which the active site pyruvoyl group is generated from an internal serine residue via an autocatalytic post-translational modification. Two non-identical subunits are generated from the proenzyme in this reaction, and the pyruvate is formed at the N-terminus of the alpha chain, which is derived from the carboxyl end of the proenzyme. The post-translation cleavage follows an unusual pathway, termed non-hydrolytic serinolysis, in which the side chain hydroxyl group of the serine supplies its oxygen atom to form the C-terminus of the beta chain, while the remainder of the serine residue undergoes an oxidative deamination to produce ammonia and the pyruvoyl prosthetic group on the alpha chain.

The protein localises to the cell membrane. It carries out the reaction a 1,2-diacyl-sn-glycero-3-phospho-L-serine + H(+) = a 1,2-diacyl-sn-glycero-3-phosphoethanolamine + CO2. Its pathway is phospholipid metabolism; phosphatidylethanolamine biosynthesis; phosphatidylethanolamine from CDP-diacylglycerol: step 2/2. Functionally, catalyzes the formation of phosphatidylethanolamine (PtdEtn) from phosphatidylserine (PtdSer). This Symbiobacterium thermophilum (strain DSM 24528 / JCM 14929 / IAM 14863 / T) protein is Phosphatidylserine decarboxylase proenzyme.